Reading from the N-terminus, the 338-residue chain is Tagatose 1,6-diphosphate aldolase (338 aa).

This sequence belongs to the aldolase LacD family.

The catalysed reaction is D-tagatofuranose 1,6-bisphosphate = D-glyceraldehyde 3-phosphate + dihydroxyacetone phosphate. It functions in the pathway carbohydrate metabolism; D-tagatose 6-phosphate degradation; D-glyceraldehyde 3-phosphate and glycerone phosphate from D-tagatose 6-phosphate: step 2/2. This is Tagatose 1,6-diphosphate aldolase from Listeria monocytogenes serovar 1/2a (strain ATCC BAA-679 / EGD-e).